The chain runs to 30 residues: Beta/omega-theraphotoxin-Tp2a (30 aa).

Intrachain disulfides connect Cys-2/Cys-16, Cys-9/Cys-21, and Cys-15/Cys-25. Positions 26–30 (KKKLW) are flexible tail region important for ability to inhibit Nav channel. The segment at 29–30 (LW) is hydrophobic dyad that anchors the toxin into the membrane while positioning it over the S3 helix of Nav1.7/SCN9A.

It belongs to the neurotoxin 30 (phrixotoxin) family. In terms of tissue distribution, expressed by the venom gland.

The protein localises to the secreted. Its function is as follows. Gating-modifier toxin that targets voltage-gated sodium channels with a selective activity on Nav1.7/SCN9A (IC(50)=1-1.5 nM). It inhibits both activation and inactivation. For inhibition of activation, it is 100-fold more selective for Nav1.7/SCN9A (IC(50)=0.26-3) than for other sodium channels (Nav1.2/SCN2A (IC(50)=40-540 nM), Nav1.3/SCN3A (IC(50)=102 nM), Nav1.4/SCN4A (IC(50)=30-39 nM), Nav1.5/SCN5A (IC(50)=19-90 nM), Nav1.6/SCN8A (IC(50)=26 nM), and Nav1.8/SCN10A (IC(50)=146 nM)). For inhibition of inactivation, it is 20-fold more potent in inhibiting inactivation on Nav1.7/SCN9A (IC(50)=250 nM) than other channels (about 4.6 uM for all channels). It also weakly inhibits Cav1.2/CACNA1C and Cav3.2/CACNA1H (29% block at 1 uM). It inhibits Nav1.7/SCN9A activation by interacting with DII and impairs Nav1.7/SCN9A inactivation by interacting with DIV. It docks on top of the DII S3 helix Nav1.7/SCN9A. It is about 60-fold less active on Nav1.7/SCN9A at depolarized potential (0 mV; IC(50)=15 nM), compared to -120 mV potential (IC(50)=0.26 nM). This toxin binds to lipid membrane. This ability correlates with hNav1.7/SCN9A inhibition, showing that membrane binding is the first step in the inhibitory mechanism of this toxin. It inhibits Nav1.2/SCN2A less potently when it is coexpressed with SCN2B or SCN4B than when it is expressed alone, showing that beta subunits (SCN2B and SCN4B) have a protective effect. This chain is Beta/omega-theraphotoxin-Tp2a, found in Thrixopelma pruriens (Peruvian green velvet tarantula).